The primary structure comprises 260 residues: Ribosomal RNA small subunit methyltransferase G (260 aa).

The disordered stretch occupies residues 1 to 45; the sequence is MKQRGPAGGRSSSPKPSAPGSGAGEGPDGRSAPASQKINKASAND. Residues 9 to 20 show a composition bias toward low complexity; that stretch reads GRSSSPKPSAPG. The span at 33–45 shows a compositional bias: polar residues; that stretch reads PASQKINKASAND. 3 residues coordinate S-adenosyl-L-methionine: Gly123, Phe128, and Arg193.

It belongs to the methyltransferase superfamily. RNA methyltransferase RsmG family.

The protein localises to the cytoplasm. It carries out the reaction guanosine(527) in 16S rRNA + S-adenosyl-L-methionine = N(7)-methylguanosine(527) in 16S rRNA + S-adenosyl-L-homocysteine. In terms of biological role, specifically methylates the N7 position of guanine in position 527 of 16S rRNA. The protein is Ribosomal RNA small subunit methyltransferase G of Bradyrhizobium diazoefficiens (strain JCM 10833 / BCRC 13528 / IAM 13628 / NBRC 14792 / USDA 110).